The primary structure comprises 512 residues: Annexin A7 (512 aa).

Over residues 14-38 (GYPGGDPSYPPAAQQAFPGGQFPPA) the composition is skewed to low complexity. Disordered regions lie at residues 14-62 (GYPG…GYPH) and 146-190 (GGFS…AQPT). Residues 39–52 (AGGGAFPPASGGGN) show a composition bias toward gly residues. Residues 164-182 (MPGQMPGQMPGQAPSGYPS) are compositionally biased toward low complexity. Annexin repeat units follow at residues 209 to 279 (FDAL…ALFM), 280 to 351 (PSTY…SIMA), 364 to 436 (QQAE…AVLQ), and 440 to 511 (NRPL…AISG).

This sequence belongs to the annexin family.

Functionally, calcium/phospholipid-binding protein which promotes membrane fusion and is involved in exocytosis. The polypeptide is Annexin A7 (anxa7) (Xenopus laevis (African clawed frog)).